The primary structure comprises 1445 residues: DNA-directed RNA polymerase subunit beta'' (1445 aa).

The Zn(2+) site is built by Cys220, Cys293, Cys300, and Cys303.

The protein belongs to the RNA polymerase beta' chain family. RpoC2 subfamily. In plastids the minimal PEP RNA polymerase catalytic core is composed of four subunits: alpha, beta, beta', and beta''. When a (nuclear-encoded) sigma factor is associated with the core the holoenzyme is formed, which can initiate transcription. Requires Zn(2+) as cofactor.

It localises to the plastid. The protein localises to the chloroplast. It carries out the reaction RNA(n) + a ribonucleoside 5'-triphosphate = RNA(n+1) + diphosphate. Functionally, DNA-dependent RNA polymerase catalyzes the transcription of DNA into RNA using the four ribonucleoside triphosphates as substrates. The sequence is that of DNA-directed RNA polymerase subunit beta'' from Anthoceros angustus (Hornwort).